We begin with the raw amino-acid sequence, 257 residues long: MGRVIRGQRKGAGSVFKAHVKHRKGAAKLRHIDFAERHGYIKGIVKDIIHDPGRGAPLAKVMFRDPYRFKKRTELFIAAEGIHTGQFIYCGKKAQLNIGNVLPVGTMPEGTIVCCLEEKPGDRGKLARASGNYATVISHNPETKKSRVKLPSGSKKVISSANRAVVGVVAGGGRIDKPILKAGRAYHKYKAKRNCWPRVRGVAMNPVEHPFGGGNHQHIGKPSTIRRDAPAGRKVGLIAARRTGRLRGTKTVQDKEN.

The segment at 207-230 (VEHPFGGGNHQHIGKPSTIRRDAP) is disordered.

This sequence belongs to the universal ribosomal protein uL2 family. As to quaternary structure, component of the large ribosomal subunit.

It is found in the cytoplasm. Component of the large ribosomal subunit. The ribosome is a large ribonucleoprotein complex responsible for the synthesis of proteins in the cell. This chain is Large ribosomal subunit protein uL2 (rpl8), found in Danio rerio (Zebrafish).